Here is a 352-residue protein sequence, read N- to C-terminus: GTPase Obg (352 aa).

The 159-residue stretch at 1–159 folds into the Obg domain; it reads MHFLDQAKIY…MWVWLRLKLL (159 aa). An OBG-type G domain is found at 160-327; sequence ADVGLLGLPN…LLDAVLGYLP (168 aa). GTP contacts are provided by residues 166–173, 191–195, 212–215, 279–282, and 308–310; these read GLPNAGKS, FTTLV, DIPG, NKLD, and SGA. S173 and T193 together coordinate Mg(2+). Residues 329–352 form a disordered region; sequence STSTETKGSEVEEVDEEGGEWSPI. The span at 339–352 shows a compositional bias: acidic residues; it reads VEEVDEEGGEWSPI.

It belongs to the TRAFAC class OBG-HflX-like GTPase superfamily. OBG GTPase family. In terms of assembly, monomer. Mg(2+) serves as cofactor.

The protein localises to the cytoplasm. In terms of biological role, an essential GTPase which binds GTP, GDP and possibly (p)ppGpp with moderate affinity, with high nucleotide exchange rates and a fairly low GTP hydrolysis rate. Plays a role in control of the cell cycle, stress response, ribosome biogenesis and in those bacteria that undergo differentiation, in morphogenesis control. In Erythrobacter litoralis (strain HTCC2594), this protein is GTPase Obg.